A 429-amino-acid chain; its full sequence is Formate-dependent phosphoribosylglycinamide formyltransferase (429 aa).

Residues 26 to 27 and glutamate 86 each bind N(1)-(5-phospho-beta-D-ribosyl)glycinamide; that span reads EL. ATP is bound by residues arginine 118, lysine 159, 199-202, and glutamate 207; that span reads EEHI. The ATP-grasp domain maps to 123 to 319; sequence ETLVKEAKVP…EFGLHLRAVL (197 aa). Mg(2+) is bound by residues glutamate 276 and glutamate 288. N(1)-(5-phospho-beta-D-ribosyl)glycinamide-binding positions include aspartate 295, lysine 375, and 382–383; that span reads RR.

The protein belongs to the PurK/PurT family. As to quaternary structure, homodimer.

The catalysed reaction is N(1)-(5-phospho-beta-D-ribosyl)glycinamide + formate + ATP = N(2)-formyl-N(1)-(5-phospho-beta-D-ribosyl)glycinamide + ADP + phosphate + H(+). Its pathway is purine metabolism; IMP biosynthesis via de novo pathway; N(2)-formyl-N(1)-(5-phospho-D-ribosyl)glycinamide from N(1)-(5-phospho-D-ribosyl)glycinamide (formate route): step 1/1. In terms of biological role, involved in the de novo purine biosynthesis. Catalyzes the transfer of formate to 5-phospho-ribosyl-glycinamide (GAR), producing 5-phospho-ribosyl-N-formylglycinamide (FGAR). Formate is provided by PurU via hydrolysis of 10-formyl-tetrahydrofolate. The polypeptide is Formate-dependent phosphoribosylglycinamide formyltransferase (Pyrococcus furiosus (strain ATCC 43587 / DSM 3638 / JCM 8422 / Vc1)).